The chain runs to 1141 residues: Serine-aspartate repeat-containing protein E (1141 aa).

A signal peptide spans 1 to 52 (MINRDNKKAITKKGMISNRLNKFSIRKYTVGTASILVGTTLIFGLGNQEAKA). The short motif at 23–34 (FSIRKYTVGTAS) is the YSIRK-G/S signaling motif element. The ligand binding A region stretch occupies residues 53–601 (AENTSTENAK…GDGTVKPEEK (549 aa)). Positions 54–248 (ENTSTENAKQ…RSTKPVATAP (195 aa)) are disordered. The span at 61-75 (AKQDDATTSDNKEVV) shows a compositional bias: basic and acidic residues. Low complexity predominate over residues 77 to 90 (ETENNSTTENDSTN). A compositionally biased stretch (basic and acidic residues) spans 92 to 108 (IKKETNTDSQPEAKEES). Residues 109–126 (TTSSTQQQQNNVTATTET) show a composition bias toward low complexity. Residues 130-145 (NIEKENVKPSTDKTAT) are compositionally biased toward basic and acidic residues. The segment covering 159 to 207 (NYTNNDVTTKPSTSEIQTKPTTPQESTNIENSQPQPTPSKVDNQVTDAT) has biased composition (polar residues). Residues 216–241 (SKEELKNNPEKLKELVRNDNNTDRST) show a composition bias toward basic and acidic residues. CNA-B domains lie at 602–714 (LYKI…YKEP), 715–824 (KYNL…YKTP), and 825–935 (KYSL…EEDT). Residues 899 to 1117 (VTNTTEDDKD…GSENNGSNNA (219 aa)) form a disordered region. Acidic residues-rich tracts occupy residues 903–913 (TEDDKDADGGE) and 930–1080 (YFEE…DSDS). The LPXTG sorting signal motif lies at 1104–1108 (LPETG). The residue at position 1107 (Thr-1107) is a Pentaglycyl murein peptidoglycan amidated threonine. Residues 1108 to 1141 (GSENNGSNNATLFGGLFAALGSLLLFGRRKKQNK) constitute a propeptide, removed by sortase.

The protein belongs to the serine-aspartate repeat-containing protein (SDr) family. Interacts with host complement factor H/CFAH (via C-terminus). Interacts with host complement regulator C4BPA.

The protein localises to the secreted. Its subcellular location is the cell wall. Functionally, cell surface-associated calcium-binding protein which plays an important role in adhesion and pathogenesis. Contributes to the resistance to killing by innate immune components in blood and thus attenuates bacterial clearance by interacting with host complement factor H/CFAH and modulating its activity. Also inhibits bacterial opsonization and killing by interacting with host complement regulator C4BPA and thus inhibiting classical complement pathway activation. The sequence is that of Serine-aspartate repeat-containing protein E (sdrE) from Staphylococcus aureus (strain N315).